The following is a 297-amino-acid chain: Ribonuclease HIII (297 aa).

Residues 81-297 (IPIIGTDEVG…NTKKAQALLK (217 aa)) form the RNase H type-2 domain. A divalent metal cation contacts are provided by aspartate 87, glutamate 88, and aspartate 192.

It belongs to the RNase HII family. RnhC subfamily. Requires Mn(2+) as cofactor. The cofactor is Mg(2+).

The protein resides in the cytoplasm. It catalyses the reaction Endonucleolytic cleavage to 5'-phosphomonoester.. Functionally, endonuclease that specifically degrades the RNA of RNA-DNA hybrids. This Streptococcus agalactiae serotype III (strain NEM316) protein is Ribonuclease HIII.